We begin with the raw amino-acid sequence, 803 residues long: MRLKDPFSLKTADMTKRSNKPKKPRDEDSSDEVGGLTCQHVSRAVDLSSVKKAVTGSLWSVCSDCLKERNVLEGETAGAHDILVCLKCGFQGCNQAEVQHSTKHQQAHHSDSHCITISLTTWKAWCFECKEELSTHCNKKALAQTLDFLQKQSAKATSGTSSKLIKLREEPAEYVDTQRGKSPVNSTLIPVKGINNLGNTCFFNAVMQNLSQTHMLNDLIQDVKEKGHKMKISPSTETNLGSLTVTLPSPEPLTSAMFLFLQSMKESGKGPVSPKILFNQLCQKAPRFKGYQQQDSQELLHYLLDSMRVEETKRIKAGILKAFNNPTEKTADEETKRQVKAYGKEGVKLNFVDRIFVGELTSTIMCEECEHISTVKEAFIDISLPIIEERISKPTNPARLGKSGREQDSLTSHDDSLAAHSQANRNSRRLSGQKLQSRHSSTSHDDRGPDTVSSRQEEDLCVAGRGLSSYRTDTMGSQSDCSEKESNLQDSSNDADSEASESEWSPRIPSVSSHSSTSDKTSITTTLSTTTHNPSLKSNPSSTPLPSIRPQQGGAVEQLVSAVSKLGLVHTSTDTLPISHSQEELSETRDRDRQHHQGAFQVLCHSYTPSSKECSVQSCLHQFTSIELLMGNNKLLCENCTDRRQRQMKRSDKKAEKVYTSARKQMLISALPPVVTLHLKRFHQAGMNLRKVNRHVDFPLLLDLAPFCSATCKNLGSGERVLYSLYGIVEHSGSMRGGHYAAYVKVRTPQRKPEQRRNQSGSREACSAPQGQWVYVSDTTVQTVPESRVLNSQAYLLFYEELL.

A disordered region spans residues 1-34 (MRLKDPFSLKTADMTKRSNKPKKPRDEDSSDEVG). The UBP-type zinc finger occupies 36–153 (LTCQHVSRAV…QTLDFLQKQS (118 aa)). The Zn(2+) site is built by C38, H40, C62, C65, C85, C88, C93, H100, H104, H113, C126, and C129. The USP domain occupies 192-802 (KGINNLGNTC…QAYLLFYEEL (611 aa)). C201 functions as the Nucleophile in the catalytic mechanism. A disordered region spans residues 394–554 (PTNPARLGKS…LPSIRPQQGG (161 aa)). A compositionally biased stretch (basic and acidic residues) spans 403–417 (SGREQDSLTSHDDSL). Polar residues-rich tracts occupy residues 419–440 (AHSQ…SRHS) and 469–480 (SYRTDTMGSQSD). The segment covering 502-531 (SEWSPRIPSVSSHSSTSDKTSITTTLSTTT) has biased composition (low complexity). Residues 532-545 (HNPSLKSNPSSTPL) are compositionally biased toward polar residues. H739 acts as the Proton acceptor in catalysis.

Belongs to the peptidase C19 family. Retina.

It is found in the photoreceptor inner segment. Its subcellular location is the cytoplasm. It localises to the nucleus. The enzyme catalyses Thiol-dependent hydrolysis of ester, thioester, amide, peptide and isopeptide bonds formed by the C-terminal Gly of ubiquitin (a 76-residue protein attached to proteins as an intracellular targeting signal).. Its function is as follows. Catalyzes the deubiquitination of SPDL1. Plays a role in the repair of UV-induced DNA damage via deubiquitination of ERCC1, promoting its recruitment to DNA damage sites. May be involved in the maintenance of photoreceptor function. May play a role in normal retinal development. The polypeptide is Ubiquitin carboxyl-terminal hydrolase 45 (Danio rerio (Zebrafish)).